Here is a 106-residue protein sequence, read N- to C-terminus: Large ribosomal subunit protein P1A (106 aa).

S2 is subject to N-acetylserine. Positions 73–106 (GGVAGGEAGEAEAEKEEEEAKEESDDDMGFGLFD) are disordered. Positions 81 to 100 (GEAEAEKEEEEAKEESDDDM) are enriched in acidic residues. A Phosphoserine modification is found at S96.

It belongs to the eukaryotic ribosomal protein P1/P2 family. Component of the large ribosomal subunit (LSU). Mature yeast ribosomes consist of a small (40S) and a large (60S) subunit. The 40S small subunit contains 1 molecule of ribosomal RNA (18S rRNA) and 33 different proteins (encoded by 57 genes). The large 60S subunit contains 3 rRNA molecules (25S, 5.8S and 5S rRNA) and 46 different proteins (encoded by 81 genes). The 5 acidic ribosomal P-proteins form the stalk structure of the 60S subunit. They are organized as a pentameric complex in which uL10/P0 interacts with 2 heterodimers, P1A-P2B and P1B-P2A. In terms of processing, N-terminally acetylated by acetyltransferase NatA.

The protein localises to the cytoplasm. In terms of biological role, component of the ribosome, a large ribonucleoprotein complex responsible for the synthesis of proteins in the cell. The small ribosomal subunit (SSU) binds messenger RNAs (mRNAs) and translates the encoded message by selecting cognate aminoacyl-transfer RNA (tRNA) molecules. The large subunit (LSU) contains the ribosomal catalytic site termed the peptidyl transferase center (PTC), which catalyzes the formation of peptide bonds, thereby polymerizing the amino acids delivered by tRNAs into a polypeptide chain. The nascent polypeptides leave the ribosome through a tunnel in the LSU and interact with protein factors that function in enzymatic processing, targeting, and the membrane insertion of nascent chains at the exit of the ribosomal tunnel. This chain is Large ribosomal subunit protein P1A, found in Saccharomyces cerevisiae (strain ATCC 204508 / S288c) (Baker's yeast).